Reading from the N-terminus, the 618-residue chain is Glutamine--fructose-6-phosphate aminotransferase [isomerizing] (618 aa).

The active-site Nucleophile; for GATase activity is the Cys-2. The region spanning 2 to 226 is the Glutamine amidotransferase type-2 domain; the sequence is CGIVGYAGRN…DFETAVLSPT (225 aa). The segment at 69–94 is disordered; the sequence is HTRWATHGRPSTKNAHPHNSGGNPGK. SIS domains are found at residues 295-434 and 467-608; these read SEDE…VRDR and CAEG…IDKP. Lys-613 functions as the For Fru-6P isomerization activity in the catalytic mechanism.

As to quaternary structure, homodimer.

The protein resides in the cytoplasm. It carries out the reaction D-fructose 6-phosphate + L-glutamine = D-glucosamine 6-phosphate + L-glutamate. In terms of biological role, catalyzes the first step in hexosamine metabolism, converting fructose-6P into glucosamine-6P using glutamine as a nitrogen source. The chain is Glutamine--fructose-6-phosphate aminotransferase [isomerizing] from Methanosarcina acetivorans (strain ATCC 35395 / DSM 2834 / JCM 12185 / C2A).